An 87-amino-acid polypeptide reads, in one-letter code: MAERRKFKKRFCKYCEQKVDFIDYKDLNSLKFSLSERFKIMPRRLTGNCKRHQEMVTVAIKRARQTALIPYIVDRKNVVENPFELIK.

This sequence belongs to the bacterial ribosomal protein bS18 family. In terms of assembly, part of the 30S ribosomal subunit. Forms a tight heterodimer with protein bS6.

Its function is as follows. Binds as a heterodimer with protein bS6 to the central domain of the 16S rRNA, where it helps stabilize the platform of the 30S subunit. This chain is Small ribosomal subunit protein bS18, found in Sulfurovum sp. (strain NBC37-1).